A 126-amino-acid polypeptide reads, in one-letter code: Protein ApaG (126 aa).

One can recognise an ApaG domain in the interval Asn2–His126.

This Shewanella pealeana (strain ATCC 700345 / ANG-SQ1) protein is Protein ApaG.